The chain runs to 321 residues: Ubiquitin carboxyl-terminal hydrolase ubh-4 (321 aa).

The 215-residue stretch at 6–220 folds into the UCH catalytic domain; that stretch reads SWCLIESDPG…ITFNLMALVP (215 aa). Catalysis depends on C83, which acts as the Nucleophile. Catalysis depends on H158, which acts as the Proton donor. The region spanning 273-301 is the ULD domain; sequence NYTPFVIELMKILAKEGKLVGLVDNAYQA.

Belongs to the peptidase C12 family. As to quaternary structure, interacts with proteasome 19S subunit rpn-13. In terms of tissue distribution, highly expressed in intestine and to a lesser extent in other tissues including muscles and neurons.

The catalysed reaction is Thiol-dependent hydrolysis of ester, thioester, amide, peptide and isopeptide bonds formed by the C-terminal Gly of ubiquitin (a 76-residue protein attached to proteins as an intracellular targeting signal).. In terms of biological role, ubiquitin-protein hydrolase involved both in the processing of ubiquitin precursors and of ubiquitinated proteins. This enzyme is a thiol protease that recognizes and hydrolyzes a peptide bond at the C-terminal glycine of ubiquitin. The chain is Ubiquitin carboxyl-terminal hydrolase ubh-4 from Caenorhabditis elegans.